The chain runs to 520 residues: GMP synthase [glutamine-hydrolyzing] (520 aa).

A Glutamine amidotransferase type-1 domain is found at Lys-12–Asp-202. Cys-89 serves as the catalytic Nucleophile. Catalysis depends on residues His-176 and Glu-178. The GMPS ATP-PPase domain maps to Trp-203–Arg-395. Ser-230–Ser-236 serves as a coordination point for ATP.

In terms of assembly, homodimer.

It catalyses the reaction XMP + L-glutamine + ATP + H2O = GMP + L-glutamate + AMP + diphosphate + 2 H(+). It functions in the pathway purine metabolism; GMP biosynthesis; GMP from XMP (L-Gln route): step 1/1. Catalyzes the synthesis of GMP from XMP. The chain is GMP synthase [glutamine-hydrolyzing] from Enterococcus faecalis (strain ATCC 700802 / V583).